The chain runs to 271 residues: Imidazole glycerol phosphate synthase subunit HisF (271 aa).

Active-site residues include D12 and D136.

Belongs to the HisA/HisF family. In terms of assembly, heterodimer of HisH and HisF.

It is found in the cytoplasm. The enzyme catalyses 5-[(5-phospho-1-deoxy-D-ribulos-1-ylimino)methylamino]-1-(5-phospho-beta-D-ribosyl)imidazole-4-carboxamide + L-glutamine = D-erythro-1-(imidazol-4-yl)glycerol 3-phosphate + 5-amino-1-(5-phospho-beta-D-ribosyl)imidazole-4-carboxamide + L-glutamate + H(+). It functions in the pathway amino-acid biosynthesis; L-histidine biosynthesis; L-histidine from 5-phospho-alpha-D-ribose 1-diphosphate: step 5/9. Its function is as follows. IGPS catalyzes the conversion of PRFAR and glutamine to IGP, AICAR and glutamate. The HisF subunit catalyzes the cyclization activity that produces IGP and AICAR from PRFAR using the ammonia provided by the HisH subunit. This Natronomonas pharaonis (strain ATCC 35678 / DSM 2160 / CIP 103997 / JCM 8858 / NBRC 14720 / NCIMB 2260 / Gabara) (Halobacterium pharaonis) protein is Imidazole glycerol phosphate synthase subunit HisF.